We begin with the raw amino-acid sequence, 216 residues long: Ras-related protein RABA1a (216 aa).

20–27 (GDSGVGKS) provides a ligand contact to GTP. The short motif at 42 to 50 (SKSTIGVEF) is the Effector region element. GTP-binding positions include 68–72 (DTAGQ), 126–129 (NKCD), and 156–157 (SA). 2 S-geranylgeranyl cysteine lipidation sites follow: Cys-213 and Cys-214.

It belongs to the small GTPase superfamily. Rab family.

It localises to the cell membrane. Functionally, involved in auxin-mediated response. May be involved in vesicle trafficking of components involved in polar auxin transport. Binds GTP and GDP and possesses intrinsic GTPase activity. This is Ras-related protein RABA1a (RABA1A) from Arabidopsis thaliana (Mouse-ear cress).